The primary structure comprises 337 residues: Fructose-1,6-bisphosphatase class 1 (337 aa).

Mg(2+) contacts are provided by Glu94, Asp116, Leu118, and Asp119. Substrate-binding positions include 119–122 (DGSS), Asn210, and Lys276. Glu282 serves as a coordination point for Mg(2+).

It belongs to the FBPase class 1 family. As to quaternary structure, homotetramer. The cofactor is Mg(2+).

The protein resides in the cytoplasm. The enzyme catalyses beta-D-fructose 1,6-bisphosphate + H2O = beta-D-fructose 6-phosphate + phosphate. Its pathway is carbohydrate biosynthesis; gluconeogenesis. This Burkholderia multivorans (strain ATCC 17616 / 249) protein is Fructose-1,6-bisphosphatase class 1.